A 952-amino-acid chain; its full sequence is MLKNAQKDFIQRHIGPSVDEQNVMLKELGYQNLDDLIKDTVPEKILLKDDLDIGDPNSEYKALRKLKDISKKNKIYSSFIGMGYYGTYTPYVILRNILENPGWYTSYTPYQPEVAQGRLEMLLNFQQMIIDFTGMDIANASLLDEGTAAAEAMGLSYRISKSESKKVFVSKNCHPQTIDVIKTRAEPLGLEIIVGDEDKDIKEDIICGIIQYPGTLGDIKDPSEAISKIHKFNGKAVLACDLLALAKLKTPAELGADIAVGSSQRFGIPMGYGGPHAAFFATKDEYKRSMPGRIVGVSVDRHGKKAYRLALQTREQHIRRDKATSNICTAQALLAIVSAAYAVYHGPQGIKKIAESVSQLTKNFADKLKQSGYELYSNEFFDTVTIKTLDKTEKIYKNALDQGVNIRKVNSEMLAVSFDERKNLYRANQLLKIFNCSETIKETMNESLSNIPKNLLRTSTYLDHPVFNSYHSETEMLRYLKKLEDSDIALNKSMIALGSCTMKLNAVAEMIPVTWKEFSQPHPFSPVEQMDGYRELFTDLKNWLRSITGFSGVSLQPNAGAQGEFAGLMVIRKFHEKNGETNRNVCLIPSSAHGTNPASAQMVGMKVVVVKCDQYGNVDYEDLKNKAEEHSENLAALMVTYPSTHGVFEEKITDICELIHNHGGQVYMDGANLNALVGIAKPGNFGPDVCHINLHKTFCIPHGGGGPGMGPIACKKHLEIFLPKHSVIKDCGPVTGMGAVSAAPWGSSSILSISWMYIKMMGSEGLRKASQVAILNANYIAHKLKDSFPILYKGKSGNVAHECIIDIRTIKSETGITEEDIAKRLIDFGYHAPTMSWPVAGTMMIEPTESESLSEIDKFCSTLIKIKQEIDKIQSGEYDKTDNPLKNAPHTHVELTSNKWDHKYEREEAAYPSEFLRTNKYWPPVGRVDNVYGDKNLFCTCPSMEEYEDTAA.

Residue K696 is modified to N6-(pyridoxal phosphate)lysine.

The protein belongs to the GcvP family. As to quaternary structure, the glycine cleavage system is composed of four proteins: P, T, L and H. It depends on pyridoxal 5'-phosphate as a cofactor.

It carries out the reaction N(6)-[(R)-lipoyl]-L-lysyl-[glycine-cleavage complex H protein] + glycine + H(+) = N(6)-[(R)-S(8)-aminomethyldihydrolipoyl]-L-lysyl-[glycine-cleavage complex H protein] + CO2. Its function is as follows. The glycine cleavage system catalyzes the degradation of glycine. The P protein binds the alpha-amino group of glycine through its pyridoxal phosphate cofactor; CO(2) is released and the remaining methylamine moiety is then transferred to the lipoamide cofactor of the H protein. This chain is Glycine dehydrogenase (decarboxylating), found in Pelagibacter ubique (strain HTCC1062).